A 398-amino-acid polypeptide reads, in one-letter code: MHGSNKLPGFATRAIHHGYDPQDHGGALVPPVYQTATFTFPTVEYGAACFAGEQAGHFYSRISNPTLNLLEARMASLEGGEAGLALASGMGAITSTLWTLLRPGDEVLLGNTLYGCTFAFLHHGIGEFGVKLRHVDMADLQALEAAMTPATRVIYFESPANPNMHMADIAGVAKIARKHGATVVVDNTYCTPYLQRPLELGADLVVHSATKYLSGHGDITAGIVVGSQALVDRIRLQGLKDMTGAVLSPHDAALLMRGIKTLNLRMDRHCANAQVLAEFLARQPQVELIHYPGLASFPQYTLARQQMSQPGGMIAFELKGGIGAGRRFMNALQLFSRAVSLGDAESLAQHPASMTHSSYTPEERAHYGISEGLVRLSVGLEDIDDLLADVQQALKASA.

Pyridoxal 5'-phosphate-binding positions include 59–61 (YSR) and 89–90 (GM). A substrate-binding site is contributed by tyrosine 114. 208–210 (SAT) is a binding site for pyridoxal 5'-phosphate. An N6-(pyridoxal phosphate)lysine modification is found at lysine 211. Residue arginine 375 participates in substrate binding.

Belongs to the trans-sulfuration enzymes family. L-methionine gamma-lyase subfamily. As to quaternary structure, homotetramer; dimer of active dimers. Requires pyridoxal 5'-phosphate as cofactor.

It catalyses the reaction L-methionine + H2O = methanethiol + 2-oxobutanoate + NH4(+). It carries out the reaction L-homocysteine + H2O = 2-oxobutanoate + hydrogen sulfide + NH4(+) + H(+). Its activity is regulated as follows. Irreversibly inactivated by DL-propargylglycine. Its function is as follows. Catalyzes the alpha,gamma-elimination of L-methionine to produce methanethiol, 2-oxobutanoate and ammonia. Is involved in L-methionine catabolism. In fact, shows a multicatalytic function since it also catalyzes gamma-replacement of L-methionine with thiol compounds, alpha,gamma-elimination and gamma-replacement reactions of L-homocysteine and its S-substituted derivatives, O-substituted-L-homoserines and DL-selenomethionine, and, to a lesser extent, alpha,beta-elimination and beta-replacement reactions of L-cysteine, S-methyl-L-cysteine, and O-acetyl-L-serine. Also catalyzes deamination and gamma-addition reactions of L-vinylglycine. Thus, the enzyme is able to cleave C-S, C-Se, and C-O bonds of sulfur, selenium, and oxygen amino acids, respectively. The protein is L-methionine gamma-lyase of Pseudomonas putida (Arthrobacter siderocapsulatus).